Consider the following 60-residue polypeptide: Large ribosomal subunit protein uL30 (60 aa).

The protein belongs to the universal ribosomal protein uL30 family. In terms of assembly, part of the 50S ribosomal subunit.

The sequence is that of Large ribosomal subunit protein uL30 from Leuconostoc mesenteroides subsp. mesenteroides (strain ATCC 8293 / DSM 20343 / BCRC 11652 / CCM 1803 / JCM 6124 / NCDO 523 / NBRC 100496 / NCIMB 8023 / NCTC 12954 / NRRL B-1118 / 37Y).